Consider the following 497-residue polypeptide: Angiopoietin-1 (497 aa).

Positions 1-19 (MTVFLSFAFLAAILTHIGC) are cleaved as a signal peptide. 5 N-linked (GlcNAc...) asparagine glycosylation sites follow: N92, N122, N154, N243, and N294. A coiled-coil region spans residues 158-256 (RLEIQLLENS…LQKQQLELMD (99 aa)). The 221-residue stretch at 276-496 (KEEEKPFRDC…STTMMIRPLD (221 aa)) folds into the Fibrinogen C-terminal domain. 2 disulfide bridges follow: C285–C314 and C438–C451.

Homooligomer. Interacts with TEK/TIE2. Interacts with SVEP1/polydom. Interacts with THBD; this interaction significantly inhibits the generation of activated PC and TAFIa/CPB2 by the thrombin/thrombomodulin complex.

The protein localises to the secreted. Functionally, binds and activates TIE2 receptor by inducing its tyrosine phosphorylation. Implicated in endothelial developmental processes later and distinct from that of VEGF. Appears to play a crucial role in mediating reciprocal interactions between the endothelium and surrounding matrix and mesenchyme. Mediates blood vessel maturation/stability. It may play an important role in the heart early development. The polypeptide is Angiopoietin-1 (ANGPT1) (Canis lupus familiaris (Dog)).